We begin with the raw amino-acid sequence, 109 residues long: Ribonuclease P protein component (109 aa).

It belongs to the RnpA family. In terms of assembly, consists of a catalytic RNA component (M1 or rnpB) and a protein subunit.

It catalyses the reaction Endonucleolytic cleavage of RNA, removing 5'-extranucleotides from tRNA precursor.. Functionally, RNaseP catalyzes the removal of the 5'-leader sequence from pre-tRNA to produce the mature 5'-terminus. It can also cleave other RNA substrates such as 4.5S RNA. The protein component plays an auxiliary but essential role in vivo by binding to the 5'-leader sequence and broadening the substrate specificity of the ribozyme. This is Ribonuclease P protein component from Streptococcus agalactiae serotype Ia (strain ATCC 27591 / A909 / CDC SS700).